The sequence spans 189 residues: Resolvase (189 aa).

Residues 1–139 form the Resolvase/invertase-type recombinase catalytic domain; it reads MLVGYARVST…EGLRSAKARG (139 aa). Catalysis depends on Ser9, which acts as the O-(5'-phospho-DNA)-serine intermediate. The segment at 130-151 is disordered; that stretch reads EGLRSAKARGRNGGRPSKRNDK. Residues 165–184 constitute a DNA-binding region (H-T-H motif); the sequence is IVDIVKQTELSRATVYRILK.

The protein belongs to the site-specific recombinase resolvase family.

Its function is as follows. A likely role for the res protein would be to stabilize pCP13 by reducing the number of plasmid multimers resulting from homologous recombination. This Clostridium perfringens (strain 13 / Type A) protein is Resolvase (res).